Consider the following 232-residue polypeptide: MRIGVITFPGSLDDRDALRAIRLAGAEPVALWHGDHDLQGVDALVLPGGFSYGDYLRCGAIASLSPIMSEVVEAAGKGMPVLGICNGFQMLAEAILVPGGLIRNDHGNFICHAQRLTVENAETPWTGGFERGQKIVIPLKNGEGSFIASAEELKRLEGEGMVVFRYRGVNPNGSLNDIAGVRNERGNVVGLMPHPEHAVEPGFGPDTDQAMRSGTDGLAFFTSVVRSTLVEA.

The Glutamine amidotransferase type-1 domain maps to 2 to 232 (RIGVITFPGS…SVVRSTLVEA (231 aa)). Cysteine 85 serves as the catalytic Nucleophile. Active-site residues include histidine 194 and glutamate 196.

Part of the FGAM synthase complex composed of 1 PurL, 1 PurQ and 2 PurS subunits.

The protein localises to the cytoplasm. The enzyme catalyses N(2)-formyl-N(1)-(5-phospho-beta-D-ribosyl)glycinamide + L-glutamine + ATP + H2O = 2-formamido-N(1)-(5-O-phospho-beta-D-ribosyl)acetamidine + L-glutamate + ADP + phosphate + H(+). It carries out the reaction L-glutamine + H2O = L-glutamate + NH4(+). It participates in purine metabolism; IMP biosynthesis via de novo pathway; 5-amino-1-(5-phospho-D-ribosyl)imidazole from N(2)-formyl-N(1)-(5-phospho-D-ribosyl)glycinamide: step 1/2. Its function is as follows. Part of the phosphoribosylformylglycinamidine synthase complex involved in the purines biosynthetic pathway. Catalyzes the ATP-dependent conversion of formylglycinamide ribonucleotide (FGAR) and glutamine to yield formylglycinamidine ribonucleotide (FGAM) and glutamate. The FGAM synthase complex is composed of three subunits. PurQ produces an ammonia molecule by converting glutamine to glutamate. PurL transfers the ammonia molecule to FGAR to form FGAM in an ATP-dependent manner. PurS interacts with PurQ and PurL and is thought to assist in the transfer of the ammonia molecule from PurQ to PurL. This Leifsonia xyli subsp. xyli (strain CTCB07) protein is Phosphoribosylformylglycinamidine synthase subunit PurQ.